A 370-amino-acid chain; its full sequence is Probable protein phosphatase 2C 67 (370 aa).

Residues T35–L344 enclose the PPM-type phosphatase domain. Mn(2+) contacts are provided by D77, G78, D276, and D335.

The protein belongs to the PP2C family. Interacts with SAUR19. Interacts with AHA2 at the plasma membrane. It depends on Mg(2+) as a cofactor. Requires Mn(2+) as cofactor.

It localises to the cell membrane. It carries out the reaction O-phospho-L-seryl-[protein] + H2O = L-seryl-[protein] + phosphate. The catalysed reaction is O-phospho-L-threonyl-[protein] + H2O = L-threonyl-[protein] + phosphate. Functionally, dephosphorylates and represses plasma membrane H(+)-ATPases (PM H(+)-ATPases, e.g. AHA1 and AHA2), thus influencing negatively plant growth and fitness. Promotes the apical hook maintenance of etiolated seedlings. In Arabidopsis thaliana (Mouse-ear cress), this protein is Probable protein phosphatase 2C 67.